Reading from the N-terminus, the 373-residue chain is T-protein (373 aa).

The region spanning 1 to 90 (MVAELTALRD…ESYSSENDKG (90 aa)) is the Chorismate mutase domain. The Prephenate/arogenate dehydrogenase domain maps to 99 to 361 (RPVVIVGGGG…DYAQRFQSES (263 aa)).

This sequence in the C-terminal section; belongs to the prephenate/arogenate dehydrogenase family.

The protein localises to the cytoplasm. It catalyses the reaction chorismate = prephenate. It carries out the reaction prephenate + NAD(+) = 3-(4-hydroxyphenyl)pyruvate + CO2 + NADH. It participates in amino-acid biosynthesis; L-tyrosine biosynthesis; (4-hydroxyphenyl)pyruvate from prephenate (NAD(+) route): step 1/1. The protein operates within metabolic intermediate biosynthesis; prephenate biosynthesis; prephenate from chorismate: step 1/1. The protein is T-protein (tyrA) of Escherichia coli (strain K12).